Reading from the N-terminus, the 652-residue chain is DNA mismatch repair protein MutL (652 aa).

It belongs to the DNA mismatch repair MutL/HexB family.

This protein is involved in the repair of mismatches in DNA. It is required for dam-dependent methyl-directed DNA mismatch repair. May act as a 'molecular matchmaker', a protein that promotes the formation of a stable complex between two or more DNA-binding proteins in an ATP-dependent manner without itself being part of a final effector complex. The sequence is that of DNA mismatch repair protein MutL from Neorickettsia sennetsu (strain ATCC VR-367 / Miyayama) (Ehrlichia sennetsu).